Here is a 175-residue protein sequence, read N- to C-terminus: NADH-ubiquinone oxidoreductase chain 6 (175 aa).

5 consecutive transmembrane segments (helical) span residues 1–21 (MMTYIVFILSIIFVMGFVGFS), 25–45 (SPIYGGLGLIVSGGVGCGIVL), 47–67 (FGGSFLGLMVFLIYLGGMMVV), 88–108 (VVLGTFITGLLMEFLMVYYVL), and 149–169 (YGTWLVIVTGWSLLIGVVVIM).

Belongs to the complex I subunit 6 family. Core subunit of respiratory chain NADH dehydrogenase (Complex I) which is composed of 45 different subunits.

The protein resides in the mitochondrion inner membrane. The enzyme catalyses a ubiquinone + NADH + 5 H(+)(in) = a ubiquinol + NAD(+) + 4 H(+)(out). Its function is as follows. Core subunit of the mitochondrial membrane respiratory chain NADH dehydrogenase (Complex I) which catalyzes electron transfer from NADH through the respiratory chain, using ubiquinone as an electron acceptor. Essential for the catalytic activity and assembly of complex I. This chain is NADH-ubiquinone oxidoreductase chain 6 (MT-ND6), found in Ovis aries (Sheep).